The sequence spans 173 residues: Crossover junction endodeoxyribonuclease RuvC (173 aa).

Catalysis depends on residues D8, E67, and D139. 3 residues coordinate Mg(2+): D8, E67, and D139.

It belongs to the RuvC family. In terms of assembly, homodimer which binds Holliday junction (HJ) DNA. The HJ becomes 2-fold symmetrical on binding to RuvC with unstacked arms; it has a different conformation from HJ DNA in complex with RuvA. In the full resolvosome a probable DNA-RuvA(4)-RuvB(12)-RuvC(2) complex forms which resolves the HJ. Mg(2+) serves as cofactor.

The protein resides in the cytoplasm. It catalyses the reaction Endonucleolytic cleavage at a junction such as a reciprocal single-stranded crossover between two homologous DNA duplexes (Holliday junction).. Its function is as follows. The RuvA-RuvB-RuvC complex processes Holliday junction (HJ) DNA during genetic recombination and DNA repair. Endonuclease that resolves HJ intermediates. Cleaves cruciform DNA by making single-stranded nicks across the HJ at symmetrical positions within the homologous arms, yielding a 5'-phosphate and a 3'-hydroxyl group; requires a central core of homology in the junction. The consensus cleavage sequence is 5'-(A/T)TT(C/G)-3'. Cleavage occurs on the 3'-side of the TT dinucleotide at the point of strand exchange. HJ branch migration catalyzed by RuvA-RuvB allows RuvC to scan DNA until it finds its consensus sequence, where it cleaves and resolves the cruciform DNA. This Salmonella arizonae (strain ATCC BAA-731 / CDC346-86 / RSK2980) protein is Crossover junction endodeoxyribonuclease RuvC.